Here is a 255-residue protein sequence, read N- to C-terminus: tRNA (guanine-N(1)-)-methyltransferase (255 aa).

Residues Gly-114 and 134 to 139 each bind S-adenosyl-L-methionine; that span reads IGDYIL.

Belongs to the RNA methyltransferase TrmD family. Homodimer.

It localises to the cytoplasm. It catalyses the reaction guanosine(37) in tRNA + S-adenosyl-L-methionine = N(1)-methylguanosine(37) in tRNA + S-adenosyl-L-homocysteine + H(+). In terms of biological role, specifically methylates guanosine-37 in various tRNAs. The protein is tRNA (guanine-N(1)-)-methyltransferase of Blochmanniella pennsylvanica (strain BPEN).